Consider the following 601-residue polypeptide: Putative pentatricopeptide repeat-containing protein At3g25060, mitochondrial (601 aa).

The N-terminal 80 residues, 1–80 (MVQTKHFCML…KVFDELPQRG (80 aa)), are a transit peptide targeting the mitochondrion. 13 PPR repeats span residues 49–79 (GSSI…LPQR), 80–114 (GVSV…KIQP), 115–149 (DSST…GYKN), 150–180 (DVFV…MAKR), 181–215 (DVIC…GFGR), 216–250 (DRVV…GLPM), 251–281 (NVVV…MMFK), 282–316 (TAVS…GFQP), 317–347 (DLVT…ILKR), 351–381 (DRVT…VGRK), 382–416 (DLVC…NIEP), 417–452 (DHAT…KIQP), and 453–487 (SEKH…NALP). The segment at 488–563 (IWVALLSGCI…VPGYSAIEVN (76 aa)) is type E motif. Residues 564 to 594 (GELRTFLMEDLSHHEHYHMLQVLRNLKTEIR) form a type E(+) motif region.

This sequence belongs to the PPR family. PCMP-E subfamily.

Its subcellular location is the mitochondrion. The chain is Putative pentatricopeptide repeat-containing protein At3g25060, mitochondrial (PCMP-E96) from Arabidopsis thaliana (Mouse-ear cress).